A 392-amino-acid chain; its full sequence is ESX-1 secretion-associated protein EspA (392 aa).

A disordered region spans residues 302 to 392 (TRQALRPRAD…GQKVLVRNVV (91 aa)). Residues 334 to 344 (QGMGGPVGMGG) show a composition bias toward gly residues.

In terms of assembly, homodimer; disulfide-linked. An artificial EsxB-EsxA heterodimer interacts with EspA.

Its subcellular location is the secreted. Required for secretion of EsxA (ESAT-6) and EsxB (CFP-10) and for virulence. Involved in translocation of bacteria from the host (human) phagolysosome to the host cytoplasm. This is ESX-1 secretion-associated protein EspA from Mycobacterium tuberculosis (strain ATCC 25618 / H37Rv).